The chain runs to 1296 residues: Capping protein, Arp2/3 and myosin-I linker protein 2 (1296 aa).

LRR repeat units lie at residues 63–87 (DCTF…TFEL), 88–110 (ESLP…AQHV), 248–271 (ELVL…LAGH), 273–296 (NSGL…ALGR), 305–328 (DSTL…DSGG), 363–386 (CSSL…AAPA), 395–415 (TRML…ALRA), 426–448 (IHDL…VIQD), 453–477 (AGAL…VLAI), 480–506 (SRSL…VLHR), 515–538 (DCPL…LIRA), 542–565 (NPKL…MLAK), 570–594 (NTRL…VAQA), 598–621 (NHSL…RPEL), and 836–859 (TMAP…GLEE). Residues 507-601 (IAQLMQDDDC…AQALEQNHSL (95 aa)) are tropomodulin-like. Residues 975–1002 (ATPVPRTLRKKLGTLFAFKKPRSTRGPR) are necessary for localization at the cell membrane. Residues 988-1296 (TLFAFKKPRS…TDQRGGGPNP (309 aa)) form a disordered region. Phosphoserine is present on S1008. Composition is skewed to basic and acidic residues over residues 1079-1091 (RPDK…RGDT) and 1118-1134 (ESKR…KAGS). S1134 carries the phosphoserine modification. Phosphothreonine is present on T1145. Residues 1176–1185 (TWKTLGQQLN) are compositionally biased toward polar residues. An Omega-N-methylarginine modification is found at R1191. Pro residues-rich tracts occupy residues 1199–1209 (PGPPSPCPSPS) and 1267–1285 (PLPP…PPSP). Residues S1203 and S1281 each carry the phosphoserine modification.

It belongs to the CARMIL family. Forms homodimers. Interacts (via C-terminus) with heterodimeric capping protein (CP); the interaction inhibits CP activity and hence promotes actin polymerization at the barbed end of actin filaments.

It localises to the cytoplasm. It is found in the cytoskeleton. The protein resides in the cell membrane. Its subcellular location is the cell projection. The protein localises to the lamellipodium. It localises to the ruffle. Its function is as follows. Cell membrane-cytoskeleton-associated protein that plays a role in the regulation of actin polymerization at the barbed end of actin filaments. Prevents F-actin heterodimeric capping protein (CP) activity at the leading edges of migrating cells, and hence generates uncapped barbed ends and enhances actin polymerization. Plays a role in cell protrusion formations; involved in cell polarity, lamellipodial assembly, membrane ruffling and macropinosome formations. Involved as well in cell migration and invadopodia formation during wound healing. Required for CD28-mediated stimulation of NF-kappa-B signaling, involved in naive T cells activation, maturation into T memory cells, and differentiation into T helper cells. Required for CD28-mediated differentiation of T regulatory cells. The sequence is that of Capping protein, Arp2/3 and myosin-I linker protein 2 from Mus musculus (Mouse).